An 832-amino-acid polypeptide reads, in one-letter code: Protein P (832 aa).

The tract at residues 1–177 (MPLSYQHFRK…FCGSPYSWEQ (177 aa)) is terminal protein domain (TP). The spacer stretch occupies residues 178-335 (ELQHGAESFN…HCLSHLVNLL (158 aa)). Polar residues-rich tracts occupy residues 205-220 (SKHQQSRLGLQPQQGQ) and 251-263 (SGHNNNSASESAS). The tract at residues 205–263 (SKHQQSRLGLQPQQGQLAKGQRGRSGSVRSRAHSATRRSVGVEPSGSGHNNNSASESAS) is disordered. The polymerase/reverse transcriptase domain (RT) stretch occupies residues 336 to 679 (EDWGPCTEHG…YATLYPVARQ (344 aa)). One can recognise a Reverse transcriptase domain in the interval 346-589 (KHHIRIPRTP…YSLNFMGYVI (244 aa)). Mg(2+) is bound by residues Asp418, Asp540, and Asp541.

It belongs to the hepadnaviridae P protein family.

The catalysed reaction is DNA(n) + a 2'-deoxyribonucleoside 5'-triphosphate = DNA(n+1) + diphosphate. It carries out the reaction Endonucleolytic cleavage to 5'-phosphomonoester.. With respect to regulation, activated by host HSP70 and HSP40 in vitro to be able to bind the epsilon loop of the pgRNA. Because deletion of the RNase H region renders the protein partly chaperone-independent, the chaperones may be needed indirectly to relieve occlusion of the RNA-binding site by this domain. Inhibited by several reverse-transcriptase inhibitors: Lamivudine, Adefovir and Entecavir. Multifunctional enzyme that converts the viral RNA genome into dsDNA in viral cytoplasmic capsids. This enzyme displays a DNA polymerase activity that can copy either DNA or RNA templates, and a ribonuclease H (RNase H) activity that cleaves the RNA strand of RNA-DNA heteroduplexes in a partially processive 3'- to 5'-endonucleasic mode. Neo-synthesized pregenomic RNA (pgRNA) are encapsidated together with the P protein, and reverse-transcribed inside the nucleocapsid. Initiation of reverse-transcription occurs first by binding the epsilon loop on the pgRNA genome, and is initiated by protein priming, thereby the 5'-end of (-)DNA is covalently linked to P protein. Partial (+)DNA is synthesized from the (-)DNA template and generates the relaxed circular DNA (RC-DNA) genome. After budding and infection, the RC-DNA migrates in the nucleus, and is converted into a plasmid-like covalently closed circular DNA (cccDNA). The activity of P protein does not seem to be necessary for cccDNA generation, and is presumably released from (+)DNA by host nuclear DNA repair machinery. This Gorilla gorilla (western gorilla) protein is Protein P.